Consider the following 228-residue polypeptide: Cytochrome c oxidase subunit 2 (228 aa).

Over 1–26 the chain is Mitochondrial intermembrane; it reads MTTWANMNLQDSASPIMEQLIYFHDH. Residues 27 to 48 form a helical membrane-spanning segment; that stretch reads ALMIIIMILMVVSYMMIAMVFN. Topologically, residues 49 to 62 are mitochondrial matrix; the sequence is KYINRFLLEGQMIE. Residues 63-82 form a helical membrane-spanning segment; it reads LAWTIAPAVILIFIAVPSLR. At 83 to 228 the chain is on the mitochondrial intermembrane side; it reads LLYLMDEINT…FINWILKMNM (146 aa). Residues H161, C196, E198, C200, H204, and M207 each coordinate Cu cation. E198 contacts Mg(2+).

This sequence belongs to the cytochrome c oxidase subunit 2 family. In terms of assembly, component of the cytochrome c oxidase (complex IV, CIV), a multisubunit enzyme composed of a catalytic core of 3 subunits and several supernumerary subunits. The complex exists as a monomer or a dimer and forms supercomplexes (SCs) in the inner mitochondrial membrane with ubiquinol-cytochrome c oxidoreductase (cytochrome b-c1 complex, complex III, CIII). Requires Cu cation as cofactor.

The protein resides in the mitochondrion inner membrane. It catalyses the reaction 4 Fe(II)-[cytochrome c] + O2 + 8 H(+)(in) = 4 Fe(III)-[cytochrome c] + 2 H2O + 4 H(+)(out). Functionally, component of the cytochrome c oxidase, the last enzyme in the mitochondrial electron transport chain which drives oxidative phosphorylation. The respiratory chain contains 3 multisubunit complexes succinate dehydrogenase (complex II, CII), ubiquinol-cytochrome c oxidoreductase (cytochrome b-c1 complex, complex III, CIII) and cytochrome c oxidase (complex IV, CIV), that cooperate to transfer electrons derived from NADH and succinate to molecular oxygen, creating an electrochemical gradient over the inner membrane that drives transmembrane transport and the ATP synthase. Cytochrome c oxidase is the component of the respiratory chain that catalyzes the reduction of oxygen to water. Electrons originating from reduced cytochrome c in the intermembrane space (IMS) are transferred via the dinuclear copper A center (CU(A)) of subunit 2 and heme A of subunit 1 to the active site in subunit 1, a binuclear center (BNC) formed by heme A3 and copper B (CU(B)). The BNC reduces molecular oxygen to 2 water molecules using 4 electrons from cytochrome c in the IMS and 4 protons from the mitochondrial matrix. The sequence is that of Cytochrome c oxidase subunit 2 (COII) from Periplaneta americana (American cockroach).